The sequence spans 409 residues: Elongation factor Tu, chloroplastic (409 aa).

The tr-type G domain occupies 10 to 214; that stretch reads KQHVNIGTIG…NVDTYIPTPV (205 aa). The segment at 19–26 is G1; it reads GHVDHGKT. 19-26 contacts GTP; that stretch reads GHVDHGKT. Residue threonine 26 coordinates Mg(2+). Positions 60 to 64 are G2; the sequence is GITIN. Residues 81 to 84 are G3; that stretch reads DCPG. GTP is bound by residues 81–85 and 136–139; these read DCPGH and NKED. The segment at 136-139 is G4; sequence NKED. The segment at 174–176 is G5; that stretch reads SAL.

Belongs to the TRAFAC class translation factor GTPase superfamily. Classic translation factor GTPase family. EF-Tu/EF-1A subfamily.

It is found in the plastid. The protein resides in the chloroplast. It catalyses the reaction GTP + H2O = GDP + phosphate + H(+). Functionally, GTP hydrolase that promotes the GTP-dependent binding of aminoacyl-tRNA to the A-site of ribosomes during protein biosynthesis. The sequence is that of Elongation factor Tu, chloroplastic (tufA) from Tupiella akineta (Green alga).